The sequence spans 476 residues: Xylan O-acetyltransferase 4 (476 aa).

Residues 1–37 form a disordered region; the sequence is MTKPQQQSPPSTTATTTTSPPPPPPSTPPPASSSSSS. Residues 1 to 63 lie on the Cytoplasmic side of the membrane; the sequence is MTKPQQQSPP…SLLSALRRSP (63 aa). The span at 8–18 shows a compositional bias: low complexity; that stretch reads SPPSTTATTTT. Residues 19–31 are compositionally biased toward pro residues; it reads SPPPPPPSTPPPA. The chain crosses the membrane as a helical; Signal-anchor for type II membrane protein span at residues 64–80; sequence VTTLVAAFFLLALFMYG. Topologically, residues 81 to 476 are lumenal; the sequence is EDVRTLAELS…PSPHPPLPPQ (396 aa). N-linked (GlcNAc...) asparagine glycans are attached at residues N103, N128, and N167. 4 disulfide bridges follow: C117/C168, C139/C204, C148/C444, and C360/C440. The GDS motif signature appears at 191 to 193; that stretch reads GDS. S193 serves as the catalytic Nucleophile. 2 N-linked (GlcNAc...) asparagine glycosylation sites follow: N299 and N369. D439 (proton donor) is an active-site residue. Positions 439 to 442 match the DXXH motif motif; the sequence is DCIH. H442 acts as the Proton acceptor in catalysis.

The protein belongs to the PC-esterase family. TBL subfamily. As to expression, highly expressed in leaves. Expressed in roots, stems and inflorescences.

The protein resides in the golgi apparatus membrane. Functionally, xylan acetyltransferase required for 2-O- and 3-O-monoacetylation of xylosyl residues in xylan. Catalyzes the 2-O-acetylation of xylan, followed by nonenzymatic acetyl migration to the O-3 position, resulting in products that are monoacetylated at both O-2 and O-3 positions. The chain is Xylan O-acetyltransferase 4 from Oryza sativa subsp. japonica (Rice).